The primary structure comprises 121 residues: Nitrogen fixation nifHD region glnB-like protein 2 (121 aa).

This sequence belongs to the P(II) protein family.

Its function is as follows. Could be involved in the regulation of nitrogen fixation. The polypeptide is Nitrogen fixation nifHD region glnB-like protein 2 (glnBII) (Methanococcus maripaludis (Methanococcus deltae)).